The following is a 122-amino-acid chain: Large ribosomal subunit protein uL14 (122 aa).

The protein belongs to the universal ribosomal protein uL14 family. Part of the 50S ribosomal subunit. Forms a cluster with proteins L3 and L19. In the 70S ribosome, L14 and L19 interact and together make contacts with the 16S rRNA in bridges B5 and B8.

Binds to 23S rRNA. Forms part of two intersubunit bridges in the 70S ribosome. This is Large ribosomal subunit protein uL14 from Mycobacterium marinum (strain ATCC BAA-535 / M).